We begin with the raw amino-acid sequence, 55 residues long: Large ribosomal subunit protein bL33 (55 aa).

This sequence belongs to the bacterial ribosomal protein bL33 family.

This Caulobacter vibrioides (strain ATCC 19089 / CIP 103742 / CB 15) (Caulobacter crescentus) protein is Large ribosomal subunit protein bL33.